The sequence spans 378 residues: Protein RecA (378 aa).

Residue glycine 65–threonine 72 participates in ATP binding. Residues alanine 325 to lysine 378 form a disordered region. Positions aspartate 339 to aspartate 351 are enriched in basic and acidic residues.

It belongs to the RecA family.

Its subcellular location is the cytoplasm. Can catalyze the hydrolysis of ATP in the presence of single-stranded DNA, the ATP-dependent uptake of single-stranded DNA by duplex DNA, and the ATP-dependent hybridization of homologous single-stranded DNAs. It interacts with LexA causing its activation and leading to its autocatalytic cleavage. The polypeptide is Protein RecA (Lactiplantibacillus pentosus (Lactobacillus pentosus)).